Here is a 193-residue protein sequence, read N- to C-terminus: Ion-translocating oxidoreductase complex subunit A (193 aa).

The next 6 helical transmembrane spans lie at 5–25 (ILFFISNILIENFILVKFLGL), 47–67 (FVILTSSVLLWCVNFFILLPL), 72–92 (LRIIAYMLIVSVSVQFLEIVL), 102–122 (LLGIFLPLITTNCTVLAIPLF), 134–154 (IFYGLSASLGFALVMIIFSCI), and 167–187 (FQGAPIILITVSLISITFMGF).

Belongs to the NqrDE/RnfAE family. In terms of assembly, the complex is composed of six subunits: RnfA, RnfB, RnfC, RnfD, RnfE and RnfG.

It is found in the cell inner membrane. Part of a membrane-bound complex that couples electron transfer with translocation of ions across the membrane. This is Ion-translocating oxidoreductase complex subunit A from Buchnera aphidicola subsp. Acyrthosiphon pisum (strain APS) (Acyrthosiphon pisum symbiotic bacterium).